Here is a 1199-residue protein sequence, read N- to C-terminus: DNA-directed RNA polymerase subunit beta (1199 aa).

The interval 1175–1199 is disordered; it reads EEKKAHEAAAQATDGKSANSTDDKK. Residues 1188 to 1199 show a composition bias toward polar residues; it reads DGKSANSTDDKK.

Belongs to the RNA polymerase beta chain family. As to quaternary structure, the RNAP catalytic core consists of 2 alpha, 1 beta, 1 beta' and 1 omega subunit. When a sigma factor is associated with the core the holoenzyme is formed, which can initiate transcription.

It carries out the reaction RNA(n) + a ribonucleoside 5'-triphosphate = RNA(n+1) + diphosphate. Its function is as follows. DNA-dependent RNA polymerase catalyzes the transcription of DNA into RNA using the four ribonucleoside triphosphates as substrates. The sequence is that of DNA-directed RNA polymerase subunit beta from Lacticaseibacillus casei (strain BL23) (Lactobacillus casei).